Here is a 327-residue protein sequence, read N- to C-terminus: Phenylalanine--tRNA ligase alpha subunit (327 aa).

E252 contributes to the Mg(2+) binding site.

Belongs to the class-II aminoacyl-tRNA synthetase family. Phe-tRNA synthetase alpha subunit type 1 subfamily. In terms of assembly, tetramer of two alpha and two beta subunits. Requires Mg(2+) as cofactor.

The protein localises to the cytoplasm. It catalyses the reaction tRNA(Phe) + L-phenylalanine + ATP = L-phenylalanyl-tRNA(Phe) + AMP + diphosphate + H(+). This Proteus mirabilis (strain HI4320) protein is Phenylalanine--tRNA ligase alpha subunit.